Consider the following 583-residue polypeptide: Aspartate--tRNA ligase (583 aa).

Residue E174 participates in L-aspartate binding. Residues 198–201 (QITK) form an aspartate region. Position 220 (R220) interacts with L-aspartate. Residues 220–222 (RDE) and Q229 contribute to the ATP site. An L-aspartate-binding site is contributed by H443. E477 lines the ATP pocket. R484 serves as a coordination point for L-aspartate. ATP is bound at residue 529 to 532 (GLDR).

Belongs to the class-II aminoacyl-tRNA synthetase family. Type 1 subfamily. Homodimer.

It localises to the cytoplasm. The enzyme catalyses tRNA(Asp) + L-aspartate + ATP = L-aspartyl-tRNA(Asp) + AMP + diphosphate. Functionally, catalyzes the attachment of L-aspartate to tRNA(Asp) in a two-step reaction: L-aspartate is first activated by ATP to form Asp-AMP and then transferred to the acceptor end of tRNA(Asp). In Streptococcus thermophilus (strain CNRZ 1066), this protein is Aspartate--tRNA ligase.